Reading from the N-terminus, the 314-residue chain is MPLLVRFLGTAASRPTVERGVSAISLTREGETLLFDCGEGTQRQMMRYGVSFALSDVFFTHVHSDHLLGITGLLRTMALQGRTEPLRLWTPRSTAKTLRQCINIGGERTTFPVEICELEAGSSVKRGEDYRIDTFAVDHRGTASLGYAIVEEERRGRFNPDLARELGIPEGPLWGRIHRGEPIMLDDGRVIESSVLVGERRRGRRIVITGDTRPCDGTLAAAQDADLLIHESTFADEEGARAQETGHSTAREAAEIALKAGVRRLVLTHISARYSRDTRDLEQEARSVFPNTLIARDGTEIELALTEELADTPS.

Residues H61, H63, D65, H66, H139, D211, and H269 each coordinate Zn(2+). The active-site Proton acceptor is D65.

The protein belongs to the RNase Z family. Homodimer. The cofactor is Zn(2+).

The catalysed reaction is Endonucleolytic cleavage of RNA, removing extra 3' nucleotides from tRNA precursor, generating 3' termini of tRNAs. A 3'-hydroxy group is left at the tRNA terminus and a 5'-phosphoryl group is left at the trailer molecule.. In terms of biological role, zinc phosphodiesterase, which displays some tRNA 3'-processing endonuclease activity. Probably involved in tRNA maturation, by removing a 3'-trailer from precursor tRNA. The polypeptide is Ribonuclease Z (Gemmatimonas aurantiaca (strain DSM 14586 / JCM 11422 / NBRC 100505 / T-27)).